The primary structure comprises 123 residues: WAP four-disulfide core domain protein 5 (123 aa).

The first 24 residues, M1–G24, serve as a signal peptide directing secretion. WAP domains follow at residues K27 to R73 and V74 to V121. 8 disulfides stabilise this stretch: C34–C62, C41–C66, C49–C61, C55–C70, C81–C109, C88–C113, C96–C108, and C102–C117.

It localises to the secreted. Putative acid-stable proteinase inhibitor. This is WAP four-disulfide core domain protein 5 (WFDC5) from Aotus nancymaae (Ma's night monkey).